Reading from the N-terminus, the 456-residue chain is Bifunctional protein GlmU (456 aa).

The segment at 1–229 (MLNSAMSVVI…ISETDGVNNR (229 aa)) is pyrophosphorylase. UDP-N-acetyl-alpha-D-glucosamine contacts are provided by residues 11-14 (LAAG), K25, Q76, 81-82 (GT), 103-105 (YGD), G140, E154, N169, and N227. D105 is a binding site for Mg(2+). Residue N227 participates in Mg(2+) binding. Residues 230–250 (LQLSRLERIYQAEQAEKLLLS) form a linker region. Positions 251-456 (GVMLRDPARF…QGWQRPVKKK (206 aa)) are N-acetyltransferase. Residues R333 and K351 each contribute to the UDP-N-acetyl-alpha-D-glucosamine site. The active-site Proton acceptor is H363. Positions 366 and 377 each coordinate UDP-N-acetyl-alpha-D-glucosamine. Acetyl-CoA contacts are provided by residues A380, 386 to 387 (NY), S405, A423, and R440.

It in the N-terminal section; belongs to the N-acetylglucosamine-1-phosphate uridyltransferase family. The protein in the C-terminal section; belongs to the transferase hexapeptide repeat family. In terms of assembly, homotrimer. It depends on Mg(2+) as a cofactor.

It is found in the cytoplasm. The enzyme catalyses alpha-D-glucosamine 1-phosphate + acetyl-CoA = N-acetyl-alpha-D-glucosamine 1-phosphate + CoA + H(+). The catalysed reaction is N-acetyl-alpha-D-glucosamine 1-phosphate + UTP + H(+) = UDP-N-acetyl-alpha-D-glucosamine + diphosphate. The protein operates within nucleotide-sugar biosynthesis; UDP-N-acetyl-alpha-D-glucosamine biosynthesis; N-acetyl-alpha-D-glucosamine 1-phosphate from alpha-D-glucosamine 6-phosphate (route II): step 2/2. It functions in the pathway nucleotide-sugar biosynthesis; UDP-N-acetyl-alpha-D-glucosamine biosynthesis; UDP-N-acetyl-alpha-D-glucosamine from N-acetyl-alpha-D-glucosamine 1-phosphate: step 1/1. Its pathway is bacterial outer membrane biogenesis; LPS lipid A biosynthesis. In terms of biological role, catalyzes the last two sequential reactions in the de novo biosynthetic pathway for UDP-N-acetylglucosamine (UDP-GlcNAc). The C-terminal domain catalyzes the transfer of acetyl group from acetyl coenzyme A to glucosamine-1-phosphate (GlcN-1-P) to produce N-acetylglucosamine-1-phosphate (GlcNAc-1-P), which is converted into UDP-GlcNAc by the transfer of uridine 5-monophosphate (from uridine 5-triphosphate), a reaction catalyzed by the N-terminal domain. The chain is Bifunctional protein GlmU from Salmonella agona (strain SL483).